The chain runs to 362 residues: Beta-ketoacyl-[acyl-carrier-protein] synthase III 2 (362 aa).

Residues C113 and H251 contribute to the active site. Positions 252 to 256 are ACP-binding; it reads QANIR. Residue N281 is part of the active site.

Belongs to the thiolase-like superfamily. FabH family. As to quaternary structure, homodimer.

The protein localises to the cytoplasm. The catalysed reaction is malonyl-[ACP] + acetyl-CoA + H(+) = 3-oxobutanoyl-[ACP] + CO2 + CoA. It participates in lipid metabolism; fatty acid biosynthesis. Its function is as follows. Catalyzes the condensation reaction of fatty acid synthesis by the addition to an acyl acceptor of two carbons from malonyl-ACP. Catalyzes the first condensation reaction which initiates fatty acid synthesis and may therefore play a role in governing the total rate of fatty acid production. Possesses both acetoacetyl-ACP synthase and acetyl transacylase activities. Its substrate specificity determines the biosynthesis of branched-chain and/or straight-chain of fatty acids. In Vibrio vulnificus (strain CMCP6), this protein is Beta-ketoacyl-[acyl-carrier-protein] synthase III 2.